Here is a 209-residue protein sequence, read N- to C-terminus: Claudin-4 (209 aa).

Over 1–7 the chain is Cytoplasmic; the sequence is MASMGLQ. The interaction with EPHA2 stretch occupies residues 1-103; it reads MASMGLQVMG…GVLLSVVGGK (103 aa). Residues 8–28 form a helical membrane-spanning segment; it reads VMGIALAVLGWLAVMLCCALP. Residues 29–81 lie on the Extracellular side of the membrane; that stretch reads MWRVTAFIGSNIVTSQTIWEGLWMNCVVQSTGQMQCKVYDSLLALPQDLQAAR. A disulfide bond links C54 and C64. Residues 82-102 form a helical membrane-spanning segment; that stretch reads ALVIISIIVAALGVLLSVVGG. At 103-117 the chain is on the cytoplasmic side; it reads KCTNCLEDESAKAKT. The chain crosses the membrane as a helical span at residues 118-138; it reads MIVAGVVFLLAGLMVIVPVSW. At 139–160 the chain is on the extracellular side; that stretch reads TAHNIIQDFYNPLVASGQKREM. Residues 161–181 form a helical membrane-spanning segment; the sequence is GASLYVGWAASGLLLLGGGLL. Topologically, residues 182 to 209 are cytoplasmic; it reads CCNCPPRTDKPYSAKYSAARSAAASNYV. Y208 bears the Phosphotyrosine; by EPHA2 mark. The tract at residues 208 to 209 is interactions with TJP1, TJP2 and TJP3; it reads YV.

Belongs to the claudin family. As to quaternary structure, can form heteropolymeric strands with other claudins. Interacts with CLDN8. Interacts with CLDN1. Directly interacts with TJP1/ZO-1. Interacts with TJP2/ZO-2 and TJP3/ZO-3. Interacts with EPHA2; phosphorylates CLDN4 and may regulate tight junctions. (Microbial infection) Interacts (via both extracellular domains) with Clostridium perfringens enterotoxin CPE; the interaction may disrupt claudin assembly in tight junctions. Phosphorylated. Phosphorylation by EPHA2 is stimulated by EFNA1 and alters interaction with TJP1.

It is found in the cell junction. The protein localises to the tight junction. It localises to the cell membrane. The catalysed reaction is chloride(in) = chloride(out). It catalyses the reaction bromide(in) = bromide(out). It carries out the reaction iodide(out) = iodide(in). The enzyme catalyses fluoride(in) = fluoride(out). Can associate with other claudins to regulate tight junction structural and functional strand dynamics. May coassemble with CLDN8 into tight junction strands containing anion-selective channels that convey paracellular chloride permeability in renal collecting ducts. May integrate into CLDN3 strands to modulate localized tight junction barrier properties. May disrupt strand assembly of channel-forming CLDN2 and CLDN15 and inhibit cation conductance. Cannot form tight junction strands on its own. The protein is Claudin-4 of Homo sapiens (Human).